The sequence spans 433 residues: Serine hydroxymethyltransferase (433 aa).

(6S)-5,6,7,8-tetrahydrofolate contacts are provided by residues L132 and 136–138 (GHL). Position 241 is an N6-(pyridoxal phosphate)lysine (K241).

It belongs to the SHMT family. As to quaternary structure, homodimer. It depends on pyridoxal 5'-phosphate as a cofactor.

It is found in the cytoplasm. It carries out the reaction (6R)-5,10-methylene-5,6,7,8-tetrahydrofolate + glycine + H2O = (6S)-5,6,7,8-tetrahydrofolate + L-serine. Its pathway is one-carbon metabolism; tetrahydrofolate interconversion. It functions in the pathway amino-acid biosynthesis; glycine biosynthesis; glycine from L-serine: step 1/1. Functionally, catalyzes the reversible interconversion of serine and glycine with tetrahydrofolate (THF) serving as the one-carbon carrier. This reaction serves as the major source of one-carbon groups required for the biosynthesis of purines, thymidylate, methionine, and other important biomolecules. Also exhibits THF-independent aldolase activity toward beta-hydroxyamino acids, producing glycine and aldehydes, via a retro-aldol mechanism. The polypeptide is Serine hydroxymethyltransferase (Afipia carboxidovorans (strain ATCC 49405 / DSM 1227 / KCTC 32145 / OM5) (Oligotropha carboxidovorans)).